We begin with the raw amino-acid sequence, 471 residues long: Argininosuccinate lyase (471 aa).

It belongs to the lyase 1 family. Argininosuccinate lyase subfamily.

The protein resides in the cytoplasm. The enzyme catalyses 2-(N(omega)-L-arginino)succinate = fumarate + L-arginine. It participates in amino-acid biosynthesis; L-arginine biosynthesis; L-arginine from L-ornithine and carbamoyl phosphate: step 3/3. The protein is Argininosuccinate lyase of Cereibacter sphaeroides (strain ATCC 17025 / ATH 2.4.3) (Rhodobacter sphaeroides).